The sequence spans 231 residues: ATP phosphoribosyltransferase (231 aa).

The protein belongs to the ATP phosphoribosyltransferase family. Short subfamily. In terms of assembly, heteromultimer composed of HisG and HisZ subunits.

The protein localises to the cytoplasm. It catalyses the reaction 1-(5-phospho-beta-D-ribosyl)-ATP + diphosphate = 5-phospho-alpha-D-ribose 1-diphosphate + ATP. The protein operates within amino-acid biosynthesis; L-histidine biosynthesis; L-histidine from 5-phospho-alpha-D-ribose 1-diphosphate: step 1/9. Catalyzes the condensation of ATP and 5-phosphoribose 1-diphosphate to form N'-(5'-phosphoribosyl)-ATP (PR-ATP). Has a crucial role in the pathway because the rate of histidine biosynthesis seems to be controlled primarily by regulation of HisG enzymatic activity. The polypeptide is ATP phosphoribosyltransferase (hisG) (Sinorhizobium fredii (strain NBRC 101917 / NGR234)).